The primary structure comprises 486 residues: uncharacterized protein (486 aa).

24-35 (IVHLGFGAFHRA) contributes to the NAD(+) binding site.

This sequence belongs to the mannitol dehydrogenase family. UxuB subfamily.

This is an uncharacterized protein from Escherichia coli (strain K12).